Consider the following 278-residue polypeptide: Phosphatidylglycerol--prolipoprotein diacylglyceryl transferase (278 aa).

The next 4 membrane-spanning stretches (helical) occupy residues 18 to 38 (IQVH…TILA), 55 to 75 (LILW…VIFE), 90 to 110 (WDGG…VYLF), and 115 to 135 (WIPV…AQGI). A 1,2-diacyl-sn-glycero-3-phospho-(1'-sn-glycerol) is bound at residue R137. A run of 3 helical transmembrane segments spans residues 177–197 (QPTF…LMSL), 207–227 (GEVF…VEGM), and 237–257 (IRVS…ILVF).

It belongs to the Lgt family.

It localises to the cell membrane. The catalysed reaction is L-cysteinyl-[prolipoprotein] + a 1,2-diacyl-sn-glycero-3-phospho-(1'-sn-glycerol) = an S-1,2-diacyl-sn-glyceryl-L-cysteinyl-[prolipoprotein] + sn-glycerol 1-phosphate + H(+). The protein operates within protein modification; lipoprotein biosynthesis (diacylglyceryl transfer). Functionally, catalyzes the transfer of the diacylglyceryl group from phosphatidylglycerol to the sulfhydryl group of the N-terminal cysteine of a prolipoprotein, the first step in the formation of mature lipoproteins. This chain is Phosphatidylglycerol--prolipoprotein diacylglyceryl transferase, found in Pediococcus pentosaceus (strain ATCC 25745 / CCUG 21536 / LMG 10740 / 183-1w).